The following is a 445-amino-acid chain: Phosphoglucosamine mutase (445 aa).

The Phosphoserine intermediate role is filled by S102. Mg(2+)-binding residues include S102, D241, D243, and D245. S102 bears the Phosphoserine mark.

It belongs to the phosphohexose mutase family. It depends on Mg(2+) as a cofactor. Post-translationally, activated by phosphorylation.

It catalyses the reaction alpha-D-glucosamine 1-phosphate = D-glucosamine 6-phosphate. Functionally, catalyzes the conversion of glucosamine-6-phosphate to glucosamine-1-phosphate. The chain is Phosphoglucosamine mutase from Escherichia coli O139:H28 (strain E24377A / ETEC).